The primary structure comprises 94 residues: MAKGQSLQDPFLNALRRERVPVSIYLVNGIKLQGQVESFDQFVILLKNTVSQMVYKHAISTVVPARPFNVSAHHSSPAPTPAGGFNGQNDETSE.

One can recognise a Sm domain in the interval 9 to 68 (DPFLNALRRERVPVSIYLVNGIKLQGQVESFDQFVILLKNTVSQMVYKHAISTVVPARPF). Residues 70 to 94 (VSAHHSSPAPTPAGGFNGQNDETSE) are disordered.

Belongs to the Hfq family. In terms of assembly, homohexamer.

Functionally, RNA chaperone that binds small regulatory RNA (sRNAs) and mRNAs to facilitate mRNA translational regulation in response to envelope stress, environmental stress and changes in metabolite concentrations. Also binds with high specificity to tRNAs. The protein is RNA-binding protein Hfq of Shewanella woodyi (strain ATCC 51908 / MS32).